A 414-amino-acid polypeptide reads, in one-letter code: Esterase FrsA (414 aa).

This sequence belongs to the FrsA family.

It catalyses the reaction a carboxylic ester + H2O = an alcohol + a carboxylate + H(+). Functionally, catalyzes the hydrolysis of esters. This is Esterase FrsA from Klebsiella pneumoniae (strain 342).